The chain runs to 545 residues: Phenylalanine--tRNA ligase beta subunit (545 aa).

A B5 domain is found at 266–342 (LSPALRNINV…IGAGFGNLEA (77 aa)). The Mg(2+) site is built by D320, D326, E329, and D330.

This sequence belongs to the phenylalanyl-tRNA synthetase beta subunit family. Type 2 subfamily. Tetramer of two alpha and two beta subunits. It depends on Mg(2+) as a cofactor.

Its subcellular location is the cytoplasm. It catalyses the reaction tRNA(Phe) + L-phenylalanine + ATP = L-phenylalanyl-tRNA(Phe) + AMP + diphosphate + H(+). The polypeptide is Phenylalanine--tRNA ligase beta subunit (Methanospirillum hungatei JF-1 (strain ATCC 27890 / DSM 864 / NBRC 100397 / JF-1)).